We begin with the raw amino-acid sequence, 793 residues long: Phenylalanine--tRNA ligase beta subunit (793 aa).

In terms of domain architecture, tRNA-binding spans 40–159 (SKLNTKLVIG…MDEMVGREIS (120 aa)). Residues 401–476 (NYDNVYSITL…RLYGYDNIIE (76 aa)) enclose the B5 domain. The Mg(2+) site is built by D454, D460, E463, and E464. The FDX-ACB domain occupies 701-793 (SKFQKSTRDI…NLKELKVKVR (93 aa)).

It belongs to the phenylalanyl-tRNA synthetase beta subunit family. Type 1 subfamily. Tetramer of two alpha and two beta subunits. The cofactor is Mg(2+).

It localises to the cytoplasm. The catalysed reaction is tRNA(Phe) + L-phenylalanine + ATP = L-phenylalanyl-tRNA(Phe) + AMP + diphosphate + H(+). This chain is Phenylalanine--tRNA ligase beta subunit, found in Mesoplasma florum (strain ATCC 33453 / NBRC 100688 / NCTC 11704 / L1) (Acholeplasma florum).